A 445-amino-acid chain; its full sequence is Deoxyribodipyrimidine photo-lyase (445 aa).

The region spanning 20–148 (SYVVYWMQAS…QVESNVIVPV (129 aa)) is the Photolyase/cryptochrome alpha/beta domain. Residue Arg239 participates in DNA binding.

The protein belongs to the DNA photolyase class-2 family. It depends on FAD as a cofactor. Coenzyme F420-(gamma-Glu)n is required as a cofactor.

The enzyme catalyses cyclobutadipyrimidine (in DNA) = 2 pyrimidine residues (in DNA).. Functionally, involved in repair of UV radiation-induced DNA damage. Catalyzes the light-dependent monomerization (300-600 nm) of cyclobutyl pyrimidine dimers (in cis-syn configuration), which are formed between adjacent bases on the same DNA strand upon exposure to ultraviolet radiation. The polypeptide is Deoxyribodipyrimidine photo-lyase (phr) (Methanothermobacter thermautotrophicus (strain ATCC 29096 / DSM 1053 / JCM 10044 / NBRC 100330 / Delta H) (Methanobacterium thermoautotrophicum)).